Reading from the N-terminus, the 206-residue chain is LexA repressor (206 aa).

The H-T-H motif DNA-binding region spans V29–A49. Catalysis depends on for autocatalytic cleavage activity residues S130 and K167.

This sequence belongs to the peptidase S24 family. Homodimer.

It catalyses the reaction Hydrolysis of Ala-|-Gly bond in repressor LexA.. Represses a number of genes involved in the response to DNA damage (SOS response), including recA and lexA. In the presence of single-stranded DNA, RecA interacts with LexA causing an autocatalytic cleavage which disrupts the DNA-binding part of LexA, leading to derepression of the SOS regulon and eventually DNA repair. The protein is LexA repressor of Alkaliphilus oremlandii (strain OhILAs) (Clostridium oremlandii (strain OhILAs)).